Consider the following 274-residue polypeptide: Thymidylate synthase (274 aa).

Arg21 serves as a coordination point for dUMP. (6R)-5,10-methylene-5,6,7,8-tetrahydrofolate is bound at residue His51. 123 to 124 (RR) contributes to the dUMP binding site. Cys156 functions as the Nucleophile in the catalytic mechanism. Residues 176-179 (RSAD), Asn187, and 217-219 (HIY) contribute to the dUMP site. A (6R)-5,10-methylene-5,6,7,8-tetrahydrofolate-binding site is contributed by Asp179. Ser273 contributes to the (6R)-5,10-methylene-5,6,7,8-tetrahydrofolate binding site.

This sequence belongs to the thymidylate synthase family. Bacterial-type ThyA subfamily. Homodimer.

It is found in the cytoplasm. It carries out the reaction dUMP + (6R)-5,10-methylene-5,6,7,8-tetrahydrofolate = 7,8-dihydrofolate + dTMP. It participates in pyrimidine metabolism; dTTP biosynthesis. In terms of biological role, catalyzes the reductive methylation of 2'-deoxyuridine-5'-monophosphate (dUMP) to 2'-deoxythymidine-5'-monophosphate (dTMP) while utilizing 5,10-methylenetetrahydrofolate (mTHF) as the methyl donor and reductant in the reaction, yielding dihydrofolate (DHF) as a by-product. This enzymatic reaction provides an intracellular de novo source of dTMP, an essential precursor for DNA biosynthesis. In Francisella tularensis subsp. holarctica (strain FTNF002-00 / FTA), this protein is Thymidylate synthase.